A 410-amino-acid polypeptide reads, in one-letter code: Arginine deiminase (410 aa).

The Amidino-cysteine intermediate role is filled by C399.

The protein belongs to the arginine deiminase family.

The protein resides in the cytoplasm. It carries out the reaction L-arginine + H2O = L-citrulline + NH4(+). Its pathway is amino-acid degradation; L-arginine degradation via ADI pathway; carbamoyl phosphate from L-arginine: step 1/2. In Listeria monocytogenes serotype 4b (strain F2365), this protein is Arginine deiminase.